The following is a 299-amino-acid chain: Protoheme IX farnesyltransferase 1 (299 aa).

Transmembrane regions (helical) follow at residues 25 to 45 (VVVL…RAGV), 47 to 67 (WSVL…AAVV), 95 to 115 (LPAL…LLAF), 119 to 139 (LTAW…TGFL), 147 to 167 (IVIG…AVSG), 173 to 193 (PLLL…ALAI), 217 to 237 (ALHI…PYAI), 243 to 263 (LYLA…WVLY), and 279 to 299 (IGYL…LLNL).

This sequence belongs to the UbiA prenyltransferase family. Protoheme IX farnesyltransferase subfamily.

It localises to the cell inner membrane. It carries out the reaction heme b + (2E,6E)-farnesyl diphosphate + H2O = Fe(II)-heme o + diphosphate. Its pathway is porphyrin-containing compound metabolism; heme O biosynthesis; heme O from protoheme: step 1/1. In terms of biological role, converts heme B (protoheme IX) to heme O by substitution of the vinyl group on carbon 2 of heme B porphyrin ring with a hydroxyethyl farnesyl side group. This Pseudomonas entomophila (strain L48) protein is Protoheme IX farnesyltransferase 1.